We begin with the raw amino-acid sequence, 285 residues long: 2,3,4,5-tetrahydropyridine-2,6-dicarboxylate N-succinyltransferase (285 aa).

Substrate contacts are provided by R111 and D148.

It belongs to the transferase hexapeptide repeat family. In terms of assembly, homotrimer.

It is found in the cytoplasm. The catalysed reaction is (S)-2,3,4,5-tetrahydrodipicolinate + succinyl-CoA + H2O = (S)-2-succinylamino-6-oxoheptanedioate + CoA. The protein operates within amino-acid biosynthesis; L-lysine biosynthesis via DAP pathway; LL-2,6-diaminopimelate from (S)-tetrahydrodipicolinate (succinylase route): step 1/3. This chain is 2,3,4,5-tetrahydropyridine-2,6-dicarboxylate N-succinyltransferase, found in Allorhizobium ampelinum (strain ATCC BAA-846 / DSM 112012 / S4) (Agrobacterium vitis (strain S4)).